The following is a 198-amino-acid chain: MADTAQEPRLITETGIDQRIAEIIEPVLTGMGYLLVRVRLSNQNGMTLQVMAEREDGTMNVQDCEAISMAISPVLDVEDPVEKAYHLEVSSPGIDRPMVRKTDFTRWQGHLVKVETSILVENRKRFRGKIVEVDADSFKLERDQIAYGEEPTVVVPFNALSDAKLILTDDLIRDALRADKAAKAAAANQNDENEADED.

This sequence belongs to the RimP family.

Its subcellular location is the cytoplasm. In terms of biological role, required for maturation of 30S ribosomal subunits. In Agrobacterium fabrum (strain C58 / ATCC 33970) (Agrobacterium tumefaciens (strain C58)), this protein is Ribosome maturation factor RimP.